The chain runs to 253 residues: Small ribosomal subunit protein uS2 (253 aa).

The protein belongs to the universal ribosomal protein uS2 family.

This is Small ribosomal subunit protein uS2 from Cereibacter sphaeroides (strain ATCC 17023 / DSM 158 / JCM 6121 / CCUG 31486 / LMG 2827 / NBRC 12203 / NCIMB 8253 / ATH 2.4.1.) (Rhodobacter sphaeroides).